We begin with the raw amino-acid sequence, 457 residues long: Argininosuccinate lyase (457 aa).

It belongs to the lyase 1 family. Argininosuccinate lyase subfamily.

It localises to the cytoplasm. The enzyme catalyses 2-(N(omega)-L-arginino)succinate = fumarate + L-arginine. It functions in the pathway amino-acid biosynthesis; L-arginine biosynthesis; L-arginine from L-ornithine and carbamoyl phosphate: step 3/3. In Haemophilus influenzae (strain 86-028NP), this protein is Argininosuccinate lyase.